Here is a 466-residue protein sequence, read N- to C-terminus: GTPase Der (466 aa).

EngA-type G domains lie at 30-193 (PVVA…PEVS) and 203-376 (RRVA…ASWD). Residues 36–43 (GRPNVGKS), 83–87 (DTGGW), 145–148 (NKVD), 209–216 (GKPNVGKS), 256–260 (DTAGL), and 321–324 (NKWD) each bind GTP. Positions 377–459 (TRIATGPLNS…PIRINVRVRE (83 aa)) constitute a KH-like domain.

The protein belongs to the TRAFAC class TrmE-Era-EngA-EngB-Septin-like GTPase superfamily. EngA (Der) GTPase family. Associates with the 50S ribosomal subunit.

Functionally, GTPase that plays an essential role in the late steps of ribosome biogenesis. This chain is GTPase Der, found in Mycobacterium avium (strain 104).